A 150-amino-acid chain; its full sequence is Transcription antitermination protein NusB (150 aa).

Belongs to the NusB family.

Functionally, involved in transcription antitermination. Required for transcription of ribosomal RNA (rRNA) genes. Binds specifically to the boxA antiterminator sequence of the ribosomal RNA (rrn) operons. This chain is Transcription antitermination protein NusB, found in Streptococcus equi subsp. zooepidemicus (strain H70).